The chain runs to 302 residues: MRHLISMRDIGREEILNILDESERMEAILNEKGHCDFLNGRILATLFYEPSTRTRLSFETAMKRLGGNVIGFTDISNTSVTKGESLADTIKVISGYSDLIAIRHPSEGAARLSSENSKVPVINAGDGSNQHPTQTLLDLYTIKREVGHIENLKIAFIGDLKYGRTVHSLCQALSLFKGVEIKLISPDELKMPREVIEDISGKIKLSEMTDVEIDDVDVVYMTRIQKERFVDVNEYYKVKGIYRLSKEHIGDKNVVIMHPLPRVDEIDSEVDTLPQARYFKQSFYGVPVRMAILKLLFEDSVK.

R53 and T54 together coordinate carbamoyl phosphate. K82 contributes to the L-aspartate binding site. Residues R103, H131, and Q134 each coordinate carbamoyl phosphate. Positions 164 and 223 each coordinate L-aspartate. The carbamoyl phosphate site is built by L260 and P261.

The protein belongs to the aspartate/ornithine carbamoyltransferase superfamily. ATCase family. As to quaternary structure, heterooligomer of catalytic and regulatory chains.

The enzyme catalyses carbamoyl phosphate + L-aspartate = N-carbamoyl-L-aspartate + phosphate + H(+). It participates in pyrimidine metabolism; UMP biosynthesis via de novo pathway; (S)-dihydroorotate from bicarbonate: step 2/3. Its function is as follows. Catalyzes the condensation of carbamoyl phosphate and aspartate to form carbamoyl aspartate and inorganic phosphate, the committed step in the de novo pyrimidine nucleotide biosynthesis pathway. The sequence is that of Aspartate carbamoyltransferase catalytic subunit from Methanococcus maripaludis (strain C6 / ATCC BAA-1332).